Reading from the N-terminus, the 77-residue chain is U10-lycotoxin-Ls1b (77 aa).

The first 20 residues, 1–20 (MKLIIFTGLVLFAIVSLIEA), serve as a signal peptide directing secretion. A propeptide spanning residues 21–26 (EEESGR) is cleaved from the precursor.

Belongs to the neurotoxin 19 (CSTX) family. 09 (U10-Lctx) subfamily. Post-translationally, contains 4 disulfide bonds. In terms of tissue distribution, expressed by the venom gland.

Its subcellular location is the secreted. This chain is U10-lycotoxin-Ls1b, found in Lycosa singoriensis (Wolf spider).